We begin with the raw amino-acid sequence, 389 residues long: Teichoic acid glycerol-phosphate transferase (389 aa).

Belongs to the CDP-glycerol glycerophosphotransferase family.

The protein resides in the cell membrane. It catalyses the reaction 4-O-[(2R)-glycerylphospho]-N-acetyl-beta-D-mannosaminyl-(1-&gt;4)-N-acetyl-alpha-D-glucosaminyl di-trans,octa-cis-undecaprenyl diphosphate + CDP-glycerol = 4-O-[di(2R)-glycerylphospho]-N-acetyl-beta-D-mannosaminyl-(1-&gt;4)-N-acetyl-alpha-D-glucosaminyl di-trans,octa-cis-undecaprenyl diphosphate + CMP + H(+). Its pathway is cell wall biogenesis; poly(ribitol phosphate) teichoic acid biosynthesis. Its function is as follows. Catalyzes the addition of a second glycerol phosphate unit from CDP-glycerol to the prenolpyrophosphate-linked disaccharide, to complete the linkage unit. The polypeptide is Teichoic acid glycerol-phosphate transferase (tarF) (Staphylococcus aureus (strain NCTC 8325 / PS 47)).